A 603-amino-acid polypeptide reads, in one-letter code: Protein US26 (603 aa).

Over residues 496–513 (EEEDQEEDDTSDDDDQEK) the composition is skewed to acidic residues. Disordered stretches follow at residues 496–536 (EEED…GSLE) and 549–568 (AVAE…DTAQ). Residues 517 to 533 (NPQNNIGSLTRTPSSPG) are compositionally biased toward polar residues.

This sequence belongs to the herpesviridae US22 family.

This chain is Protein US26 (US26), found in Human cytomegalovirus (strain Merlin) (HHV-5).